The primary structure comprises 976 residues: LRR receptor-like serine/threonine-protein kinase ERECTA (976 aa).

An N-terminal signal peptide occupies residues 1–24; sequence MALFRDIVLLGFLFCLSLVATVTS. Topologically, residues 25–580 are extracellular; the sequence is EEGATLLEIK…RRTVRVSISR (556 aa). Residues N65 and N74 are each glycosylated (N-linked (GlcNAc...) asparagine). 20 LRR repeats span residues 69–92, 93–115, 117–140, 141–163, 165–187, 189–212, 213–235, 237–259, 260–282, 284–306, 308–330, 332–355, 356–379, 380–401, 404–425, 428–449, 452–473, 476–498, 500–522, and 523–545; these read NVVA…GDLK, SLLS…IGDC, SLQN…SKLK, QLEQ…LSQI, NLKI…IYWN, VLQY…CQLT, GLWY…IGNC, AFQV…IGFL, QVAT…IGLM, ALAV…LGNL, FTEK…LGNM, KLHY…GKLT, DLFD…SSCT, NLNS…AFQK, SMTY…ELSR, NLDT…SLGD, HLLK…DFGN, SIME…LNQL, NIIL…ANCL, and SLTV…NNFS. 2 N-linked (GlcNAc...) asparagine glycosylation sites follow: N221 and N234. N305 and N329 each carry an N-linked (GlcNAc...) asparagine glycan. N-linked (GlcNAc...) asparagine glycosylation is present at N409. N-linked (GlcNAc...) asparagine glycosylation occurs at N457. N510, N528, and N543 each carry an N-linked (GlcNAc...) asparagine glycan. A helical membrane pass occupies residues 581 to 601; it reads AAILGIAIGGLVILLMVLIAA. The Cytoplasmic portion of the chain corresponds to 602–976; it reads CRPHNPPPFL…FGQVISQNSE (375 aa). T645 carries the phosphothreonine modification. Residues 648–918 form the Protein kinase domain; that stretch reads LSEKYIIGHG…QVTRVLGSFM (271 aa). ATP is bound by residues 654–662 and K676; that span reads IGHGASSTV. Residues Y721 and Y760 each carry the phosphotyrosine modification. Residue D773 is the Proton acceptor of the active site. At Y815 the chain carries Phosphotyrosine. At T823 the chain carries Phosphothreonine.

It belongs to the protein kinase superfamily. Ser/Thr protein kinase family. Homodimer and heterodimer with ERL1 and TMM. Interacts with EPF1, EPF2, EPFL4, EPFL5 and EPFL6. Interacts with SERK1, SERK2, SERK3/BAK1 and SERK4 in a EPF2-induced manner. Interacts with EPFL9/STOMAGEN. In terms of tissue distribution, mostly expressed in shoot apical meristems (SAM), organ primordia, flowers, siliques and young rosette leaves, and, to a lower extent, in stems and cauline leaves. Expressed in growing inflorescence stems and pedicels. Detected in epidermis, phloem and xylem.

It is found in the cell membrane. It catalyses the reaction L-seryl-[protein] + ATP = O-phospho-L-seryl-[protein] + ADP + H(+). The catalysed reaction is L-threonyl-[protein] + ATP = O-phospho-L-threonyl-[protein] + ADP + H(+). Functionally, receptor kinase that, together with ERL1 and ERL2, regulates aerial architecture, including inflorescence (e.g. shoot apical meristem-originating organ shape, elongation of the internode and pedicels, and adaxial-abaxial polarity), and stomatal patterning (e.g. density and clustering), probably by tuning cell division and expansion. Redundantly involved with ERL1 in procambial development regulation. Forms a functional ligand-receptor pair with EPF2 (AC Q8LC53). Modulates plant transpiration efficiency by controlling stomatal density, leaf photosynthetic capacity, epidermal cell expansion, mesophyll cell proliferation and cell-cell contact. A phloem-specific expression of ER is sufficient for proper inflorescence architecture. Probable major trait regulating canalization (maintenance of phenotype despite varying environment) in many aspect of the plant physiology (e.g. plant morphology, light-dependent leaves number, branch number, flowering time, phytate and mineral concentrations) by transducing microenvironmental variation into phenotypic differentiation (ecological amplifier). May maintain development integrity in heat stress conditions. Regulates cell wall composition and structure. Confers resistance to the pathogenic bacteria Ralstonia solanacearum and to the necrotrophic fungi Plectosphaerella cucumerina and Pythium irregulare, and required for callose deposition upon infection. Resistance to P.cucumerina seems cell wall-mediated. Forms a constitutive complex with TMM involved in the recognition of the stomatal regulatory peptides EPF1, EPF2 and EPFL9/STOMAGEN. The sequence is that of LRR receptor-like serine/threonine-protein kinase ERECTA from Arabidopsis thaliana (Mouse-ear cress).